The primary structure comprises 189 residues: ATP synthase subunit b (189 aa).

Residues 25–45 (LPVWPEVVIGLICFGIVFFVF) traverse the membrane as a helical segment.

Belongs to the ATPase B chain family. As to quaternary structure, F-type ATPases have 2 components, F(1) - the catalytic core - and F(0) - the membrane proton channel. F(1) has five subunits: alpha(3), beta(3), gamma(1), delta(1), epsilon(1). F(0) has three main subunits: a(1), b(2) and c(10-14). The alpha and beta chains form an alternating ring which encloses part of the gamma chain. F(1) is attached to F(0) by a central stalk formed by the gamma and epsilon chains, while a peripheral stalk is formed by the delta and b chains.

Its subcellular location is the cell membrane. In terms of biological role, f(1)F(0) ATP synthase produces ATP from ADP in the presence of a proton or sodium gradient. F-type ATPases consist of two structural domains, F(1) containing the extramembraneous catalytic core and F(0) containing the membrane proton channel, linked together by a central stalk and a peripheral stalk. During catalysis, ATP synthesis in the catalytic domain of F(1) is coupled via a rotary mechanism of the central stalk subunits to proton translocation. Functionally, component of the F(0) channel, it forms part of the peripheral stalk, linking F(1) to F(0). This is ATP synthase subunit b from Streptomyces griseus subsp. griseus (strain JCM 4626 / CBS 651.72 / NBRC 13350 / KCC S-0626 / ISP 5235).